The primary structure comprises 290 residues: Ribosomal RNA small subunit methyltransferase A (290 aa).

The S-adenosyl-L-methionine site is built by Asn27, Leu29, Gly54, Glu75, Asp100, and Asn125.

The protein belongs to the class I-like SAM-binding methyltransferase superfamily. rRNA adenine N(6)-methyltransferase family. RsmA subfamily.

Its subcellular location is the cytoplasm. The enzyme catalyses adenosine(1518)/adenosine(1519) in 16S rRNA + 4 S-adenosyl-L-methionine = N(6)-dimethyladenosine(1518)/N(6)-dimethyladenosine(1519) in 16S rRNA + 4 S-adenosyl-L-homocysteine + 4 H(+). Specifically dimethylates two adjacent adenosines (A1518 and A1519) in the loop of a conserved hairpin near the 3'-end of 16S rRNA in the 30S particle. May play a critical role in biogenesis of 30S subunits. The chain is Ribosomal RNA small subunit methyltransferase A from Streptococcus uberis (strain ATCC BAA-854 / 0140J).